The primary structure comprises 311 residues: Methionyl-tRNA formyltransferase (311 aa).

110–113 (SLLP) lines the (6S)-5,6,7,8-tetrahydrofolate pocket.

This sequence belongs to the Fmt family.

The catalysed reaction is L-methionyl-tRNA(fMet) + (6R)-10-formyltetrahydrofolate = N-formyl-L-methionyl-tRNA(fMet) + (6S)-5,6,7,8-tetrahydrofolate + H(+). Its function is as follows. Attaches a formyl group to the free amino group of methionyl-tRNA(fMet). The formyl group appears to play a dual role in the initiator identity of N-formylmethionyl-tRNA by promoting its recognition by IF2 and preventing the misappropriation of this tRNA by the elongation apparatus. The protein is Methionyl-tRNA formyltransferase of Streptococcus pneumoniae (strain P1031).